Reading from the N-terminus, the 935-residue chain is C-1-tetrahydrofolate synthase, cytoplasmic (935 aa).

Met-1 is modified (N-acetylmethionine). A methylenetetrahydrofolate dehydrogenase and methenyltetrahydrofolate cyclohydrolase (D/C) domain region spans residues 2 to 291 (APAGILNGKV…MLMQSTVESA (290 aa)). Residues 52-56 (YINVK) and 99-101 (VQL) each bind substrate. The active site involves Lys-56. NADP(+) contacts are provided by residues 172–174 (GRS) and Ser-197. A substrate-binding site is contributed by 272-276 (PGGVG). The formyltetrahydrofolate synthetase domain stretch occupies residues 310-935 (LNLKTPVPSD…PETEQVNGLF (626 aa)). Position 318 is a phosphoserine (Ser-318). Residue 380-387 (TPLGEGKS) participates in ATP binding. Phosphoserine is present on residues Ser-413 and Ser-490.

In the N-terminal section; belongs to the tetrahydrofolate dehydrogenase/cyclohydrolase family. This sequence in the C-terminal section; belongs to the formate--tetrahydrofolate ligase family. Homodimer.

It is found in the cytoplasm. It carries out the reaction (6R)-5,10-methylene-5,6,7,8-tetrahydrofolate + NADP(+) = (6R)-5,10-methenyltetrahydrofolate + NADPH. It catalyses the reaction (6R)-5,10-methenyltetrahydrofolate + H2O = (6R)-10-formyltetrahydrofolate + H(+). The enzyme catalyses (6S)-5,6,7,8-tetrahydrofolate + formate + ATP = (6R)-10-formyltetrahydrofolate + ADP + phosphate. The protein operates within one-carbon metabolism; tetrahydrofolate interconversion. Its function is as follows. Trifunctional enzyme that catalyzes the interconversion of three forms of one-carbon-substituted tetrahydrofolate: (6R)-5,10-methylene-5,6,7,8-tetrahydrofolate, 5,10-methenyltetrahydrofolate and (6S)-10-formyltetrahydrofolate. These derivatives of tetrahydrofolate are differentially required in nucleotide and amino acid biosynthesis, (6S)-10-formyltetrahydrofolate being required for purine biosynthesis while (6R)-5,10-methylene-5,6,7,8-tetrahydrofolate is used for serine and methionine biosynthesis for instance. The chain is C-1-tetrahydrofolate synthase, cytoplasmic (Mthfd1) from Rattus norvegicus (Rat).